Consider the following 178-residue polypeptide: Large ribosomal subunit protein uL6 (178 aa).

Belongs to the universal ribosomal protein uL6 family. Part of the 50S ribosomal subunit.

In terms of biological role, this protein binds to the 23S rRNA, and is important in its secondary structure. It is located near the subunit interface in the base of the L7/L12 stalk, and near the tRNA binding site of the peptidyltransferase center. The sequence is that of Large ribosomal subunit protein uL6 from Natranaerobius thermophilus (strain ATCC BAA-1301 / DSM 18059 / JW/NM-WN-LF).